A 467-amino-acid polypeptide reads, in one-letter code: ATP synthase subunit beta (467 aa).

Residue 150–157 (GGAGVGKT) coordinates ATP.

This sequence belongs to the ATPase alpha/beta chains family. In terms of assembly, F-type ATPases have 2 components, CF(1) - the catalytic core - and CF(0) - the membrane proton channel. CF(1) has five subunits: alpha(3), beta(3), gamma(1), delta(1), epsilon(1). CF(0) has three main subunits: a(1), b(2) and c(9-12). The alpha and beta chains form an alternating ring which encloses part of the gamma chain. CF(1) is attached to CF(0) by a central stalk formed by the gamma and epsilon chains, while a peripheral stalk is formed by the delta and b chains.

It localises to the cell inner membrane. The enzyme catalyses ATP + H2O + 4 H(+)(in) = ADP + phosphate + 5 H(+)(out). In terms of biological role, produces ATP from ADP in the presence of a proton gradient across the membrane. The catalytic sites are hosted primarily by the beta subunits. This is ATP synthase subunit beta from Aliivibrio salmonicida (strain LFI1238) (Vibrio salmonicida (strain LFI1238)).